Reading from the N-terminus, the 386-residue chain is Patatin-06 (386 aa).

The first 23 residues, 1–23 (MATTKSFLILFFMILATTSSTCA), serve as a signal peptide directing secretion. Residues 32–229 (LSIDGGGIKG…TVGDPALLSL (198 aa)) form the PNPLA domain. A GXGXXG motif is present at residues 36–41 (GGGIKG). Residues 75-79 (GTSTG) carry the GXSXG motif. The Nucleophile role is filled by S77. N115 carries an N-linked (GlcNAc...) asparagine glycan. D215 acts as the Proton acceptor in catalysis. The DGA/G signature appears at 215–217 (DGG). Residues 321 to 384 (ENALTGTTTE…NRKKLRANKA (64 aa)) adopt a coiled-coil conformation.

Belongs to the patatin family. As to expression, tuber.

Its subcellular location is the vacuole. Functionally, probable lipolytic acyl hydrolase (LAH), an activity which is thought to be involved in the response of tubers to pathogens. This Solanum tuberosum (Potato) protein is Patatin-06.